A 212-amino-acid chain; its full sequence is 2-C-methyl-D-erythritol 4-phosphate cytidylyltransferase (212 aa).

The protein belongs to the IspD/TarI cytidylyltransferase family. IspD subfamily.

The enzyme catalyses 2-C-methyl-D-erythritol 4-phosphate + CTP + H(+) = 4-CDP-2-C-methyl-D-erythritol + diphosphate. The protein operates within isoprenoid biosynthesis; isopentenyl diphosphate biosynthesis via DXP pathway; isopentenyl diphosphate from 1-deoxy-D-xylulose 5-phosphate: step 2/6. Catalyzes the formation of 4-diphosphocytidyl-2-C-methyl-D-erythritol from CTP and 2-C-methyl-D-erythritol 4-phosphate (MEP). The protein is 2-C-methyl-D-erythritol 4-phosphate cytidylyltransferase of Chlamydia caviae (strain ATCC VR-813 / DSM 19441 / 03DC25 / GPIC) (Chlamydophila caviae).